The following is a 202-amino-acid chain: Snake venom metalloproteinase TM-1 (202 aa).

Q1 is subject to Pyrrolidone carboxylic acid. The region spanning 7–202 (RYVMLAIVAD…TNPQCILNAP (196 aa)) is the Peptidase M12B domain. 3 disulfides stabilise this stretch: C118-C197, C159-C181, and C161-C164. H143 is a binding site for Zn(2+). E144 is a catalytic residue. Zn(2+) is bound by residues H147 and H153.

It belongs to the venom metalloproteinase (M12B) family. P-I subfamily. As to quaternary structure, monomer. Requires Zn(2+) as cofactor. The N-terminus is blocked. Post-translationally, not glycosylated. As to expression, expressed by the venom gland.

It localises to the secreted. Inhibited by EDTA and 1,10-phenanthroline. Is also inhibited by endogenous tripeptide inhibitors pyroGlu-Asn-Trp, pyroGlu-Gln-Trp, and pyroGlu-Lys-Trp. Its function is as follows. Potent fibrinogenolytic protease which cleaves mainly the Aalpha (FGA) and Bbeta (FGB) chains of fibrinogen and slightly the gamma chain (FGG). Shows preference for substrates having a moderate-size and hydrophobic residue at the P1' position. Preferentially cleaves Ala-|-Leu and Tyr-|-Leu bonds. Is more susceptible to tripeptide inhibitors than TM-3 (AC O57413). The protein is Snake venom metalloproteinase TM-1 of Protobothrops mucrosquamatus (Taiwan habu).